We begin with the raw amino-acid sequence, 1211 residues long: Periplasmic acid trehalase ATC1 (1211 aa).

The Cytoplasmic segment spans residues 1–46 (MKRIRSLWFNAEASYSNLNNSPSLRNKNSTGNNSRSKNYRSFSRFD). The helical transmembrane segment at 47-67 (LINSILLLMMLFLLAIFVTAL) threads the bilayer. Over 68 to 1211 (YLTKSSRLTY…ATIKEIVLND (1144 aa)) the chain is Periplasmic. Residues 70-131 (TKSSRLTYSH…NTAYYDDENM (62 aa)) form a required for cell surface targeting region. 10 N-linked (GlcNAc...) asparagine glycosylation sites follow: asparagine 98, asparagine 207, asparagine 238, asparagine 247, asparagine 255, asparagine 259, asparagine 325, asparagine 370, asparagine 376, and asparagine 488. 513 to 514 (WD) provides a ligand contact to substrate. Residues asparagine 539, asparagine 568, asparagine 628, and asparagine 638 are each glycosylated (N-linked (GlcNAc...) asparagine). Glutamate 644 (proton donor) is an active-site residue. N-linked (GlcNAc...) asparagine glycosylation is found at asparagine 696 and asparagine 705. 711 to 712 (KQ) contributes to the substrate binding site. Residues asparagine 879, asparagine 897, asparagine 910, asparagine 972, asparagine 990, asparagine 1031, asparagine 1049, asparagine 1064, asparagine 1147, and asparagine 1157 are each glycosylated (N-linked (GlcNAc...) asparagine).

Belongs to the glycosyl hydrolase 65 family. Post-translationally, glycosylated.

It localises to the membrane. It is found in the vacuole lumen. Its subcellular location is the periplasm. The catalysed reaction is alpha,alpha-trehalose + H2O = alpha-D-glucose + beta-D-glucose. Its function is as follows. Periplasmic acid trehalase that catalyzes hydrolysis of the disaccharide trehalose and required for growth on trehalose as carbon source. Growth on trehalose is strictly respiratory. This is Periplasmic acid trehalase ATC1 from Saccharomyces cerevisiae (strain CEN.PK113-7D) (Baker's yeast).